Consider the following 89-residue polypeptide: Probable Fe(2+)-trafficking protein (89 aa).

It belongs to the Fe(2+)-trafficking protein family.

In terms of biological role, could be a mediator in iron transactions between iron acquisition and iron-requiring processes, such as synthesis and/or repair of Fe-S clusters in biosynthetic enzymes. This is Probable Fe(2+)-trafficking protein from Acinetobacter baumannii (strain SDF).